The following is a 397-amino-acid chain: Vacuolar protein sorting-associated protein 37A (397 aa).

A Phosphoserine modification is found at Ser-18. The VPS37 C-terminal domain occupies 308-397; sequence KSTFEKKMQR…AMHSQFHAPL (90 aa).

The protein belongs to the VPS37 family. Component of the ESCRT-I complex (endosomal sorting complex required for transport I) which consists of TSG101, VPS28, a VPS37 protein (VPS37A to -D) and MVB12A or MVB12B in a 1:1:1:1 stoichiometry. Interacts with TSG101, VPS28 and HGS. Component of an ESCRT-I complex (endosomal sorting complex required for transport I) which consists of TSG101, VPS28, VPS37A and UBAP1 in a 1:1:1:1 stoichiometry.

It is found in the late endosome membrane. The protein resides in the nucleus. Its function is as follows. Component of the ESCRT-I complex, a regulator of vesicular trafficking process. Required for the sorting of endocytic ubiquitinated cargos into multivesicular bodies. May be involved in cell growth and differentiation. This is Vacuolar protein sorting-associated protein 37A (Vps37a) from Mus musculus (Mouse).